Here is a 354-residue protein sequence, read N- to C-terminus: MAIDKRKNDHIYLASSEISQVGSPWFDEVILLHNALPEIDLSEVDITTRFLGVKVNAPFGIGAMTGGTELAGKINAELAKIAEEFGIPIYVGSQRVALMKPEVRWTFEVVKKNAPSVPKVANLGAPQLAELSDEKLAEWVSQAVDMIDAYAIAIHLNAAQEVIQPEGEPRFRGVFEKIKVVRKAAGRPVIVKEVGNGISKEVASRLVEVADAIDVGGYGGTSFIAIEGARAAESGSSMRRRVAEVFKSWGIPTAASICEARSGYRGYIIASGGIRSGLDGAKALALGADFFTMSQPFLKAALEGRLREEIETVIAEVKIAMFLTGSRTIEDLKSAPRVYGPRLRNWIEQRKLVC.

6-7 (RK) contributes to the substrate binding site. Residues 63-65 (AMT), Ser-93, and Asn-122 contribute to the FMN site. 93–95 (SQR) contributes to the substrate binding site. Gln-160 contributes to the substrate binding site. A Mg(2+)-binding site is contributed by Glu-161. FMN contacts are provided by residues Lys-192, Thr-221, 273 to 275 (GIR), and 294 to 295 (SQ).

This sequence belongs to the IPP isomerase type 2 family. In terms of assembly, homooctamer. Dimer of tetramers. FMN serves as cofactor. The cofactor is NADPH. It depends on Mg(2+) as a cofactor.

It localises to the cytoplasm. It catalyses the reaction isopentenyl diphosphate = dimethylallyl diphosphate. Involved in the biosynthesis of isoprenoids. Catalyzes the 1,3-allylic rearrangement of the homoallylic substrate isopentenyl (IPP) to its allylic isomer, dimethylallyl diphosphate (DMAPP). The polypeptide is Isopentenyl-diphosphate delta-isomerase (Pyrobaculum islandicum (strain DSM 4184 / JCM 9189 / GEO3)).